We begin with the raw amino-acid sequence, 251 residues long: Probable transcriptional regulatory protein DET0444 (251 aa).

This sequence belongs to the TACO1 family.

Its subcellular location is the cytoplasm. This chain is Probable transcriptional regulatory protein DET0444, found in Dehalococcoides mccartyi (strain ATCC BAA-2266 / KCTC 15142 / 195) (Dehalococcoides ethenogenes (strain 195)).